Reading from the N-terminus, the 311-residue chain is Ribosomal RNA small subunit methyltransferase H (311 aa).

S-adenosyl-L-methionine-binding positions include 32–34 (AGH), D52, F79, D100, and Q107.

Belongs to the methyltransferase superfamily. RsmH family.

The protein resides in the cytoplasm. The enzyme catalyses cytidine(1402) in 16S rRNA + S-adenosyl-L-methionine = N(4)-methylcytidine(1402) in 16S rRNA + S-adenosyl-L-homocysteine + H(+). Specifically methylates the N4 position of cytidine in position 1402 (C1402) of 16S rRNA. The sequence is that of Ribosomal RNA small subunit methyltransferase H from Staphylococcus aureus (strain COL).